The chain runs to 154 residues: MSSSLVFQGEFQHIIRIYNTNVDGRRKIQYALTCVKGVGRRFANLVCKKADIDTSKRAGELSKDEVERLTTIMNHPRQYNIPTWFLNRQKDIKDGKYSHCLANQIDVKFREDLERLKKIRAHRGVRHHFGLRVRGQKTKTTGRRGRTVGVAGRR.

It belongs to the universal ribosomal protein uS13 family.

It is found in the cytoplasm. Located at the top of the head of the 40S subunit, it contacts several helices of the 18S rRNA. This Dictyostelium discoideum (Social amoeba) protein is Small ribosomal subunit protein uS13 (rps18).